We begin with the raw amino-acid sequence, 202 residues long: LexA repressor 1 (202 aa).

The H-T-H motif DNA-binding region spans 28-48 (RAEIAQELGFKSPNAAEEHLK). Residues Ser-123 and Lys-160 each act as for autocatalytic cleavage activity in the active site.

This sequence belongs to the peptidase S24 family. Homodimer.

It catalyses the reaction Hydrolysis of Ala-|-Gly bond in repressor LexA.. Functionally, represses a number of genes involved in the response to DNA damage (SOS response), including recA and lexA. In the presence of single-stranded DNA, RecA interacts with LexA causing an autocatalytic cleavage which disrupts the DNA-binding part of LexA, leading to derepression of the SOS regulon and eventually DNA repair. The polypeptide is LexA repressor 1 (Pseudomonas syringae pv. tomato (strain ATCC BAA-871 / DC3000)).